The primary structure comprises 85 residues: Toxin CsE8 (85 aa).

The signal sequence occupies residues 1–19 (MNSLLMITACLVLFGTVWS). One can recognise an LCN-type CS-alpha/beta domain in the interval 20–83 (EKGYLVHEDT…TWPLIGKLCG (64 aa)). 4 cysteine pairs are disulfide-bonded: Cys31–Cys82, Cys35–Cys58, Cys44–Cys63, and Cys48–Cys65. Cys82 is subject to Cysteine amide.

It belongs to the long (4 C-C) scorpion toxin superfamily. Sodium channel inhibitor family. Beta subfamily. Expressed by the venom gland.

Its subcellular location is the secreted. Beta toxins bind voltage-independently at site-4 of sodium channels (Nav) and shift the voltage of activation toward more negative potentials thereby affecting sodium channel activation and promoting spontaneous and repetitive firing. This is Toxin CsE8 from Centruroides sculpturatus (Arizona bark scorpion).